The following is a 704-amino-acid chain: Ubiquitin-like modifier-activating enzyme atg7 (704 aa).

The GXGXXG motif motif lies at 372–377 (GAGTLG). The Glycyl thioester intermediate role is filled by Cys555. Residues 660–699 (ALTEKDYITELSGLAEVQRKAEAAANDVEWDSDEEGMEDE) are homodimerization. The disordered stretch occupies residues 682–704 (AAANDVEWDSDEEGMEDEEPELL). Acidic residues predominate over residues 687 to 704 (VEWDSDEEGMEDEEPELL).

It belongs to the ATG7 family. In terms of assembly, homodimer. Interacts with ATG8 through a thioester bond between Cys-555 and the C-terminal Gly of ATG8 and with ATG12 through a thioester bond between Cys-555 and the C-terminal Gly of ATG12. Also interacts with ATG3.

The protein localises to the cytoplasm. It is found in the preautophagosomal structure. Functionally, E1-like activating enzyme involved in the 2 ubiquitin-like systems required for cytoplasm to vacuole transport (Cvt) and autophagy. Activates ATG12 for its conjugation with ATG5 and ATG8 for its conjugation with phosphatidylethanolamine. Both systems are needed for the ATG8 association to Cvt vesicles and autophagosomes membranes. Autophagy is essential for maintenance of amino acid levels and protein synthesis under nitrogen starvation. Required for selective autophagic degradation of the nucleus (nucleophagy) as well as for mitophagy which contributes to regulate mitochondrial quantity and quality by eliminating the mitochondria to a basal level to fulfill cellular energy requirements and preventing excess ROS production. Required for normal mycelial growth and conidiogenesis, and regulates sclerotial formation. Plays an essential role in pathogenesis. The sequence is that of Ubiquitin-like modifier-activating enzyme atg7 from Botryotinia fuckeliana (strain T4) (Noble rot fungus).